Consider the following 361-residue polypeptide: MSKTLLVMAGGTGGHVFPGLAVADRLKAQGWTIHWLGTADRMEAELVPAHGYPISFIDIQGVRGNGIKRLLVAPYRIVKSVLQARRVLKTIRPDVVLGMGGFASGPGGVAAWLSGIPLLLHEQNAAAGLTNKLLARLAKRVLMAFPGAFAPSRRTAVVGNPVRPEVVALPDPQLRSGAEPLRLLIVGGSLGARVLNEQVPPAVAAAGVPIEVRHQCGKGNRDAVAEAYAKQGVAAEVSEFIKDMAGAYAWADLVVCRAGALTVSEVAAAGVAAIFVPLPHAVDDHQTRNALTLVDGGAAEFLPQSELTTASLAARLSWLAGRRETLLNMAQAARRVAITDAAERVADECKRLATGQIEREL.

Residues 12–14 (TGG), N124, R163, S189, I241, 260–265 (ALTVSE), and Q286 contribute to the UDP-N-acetyl-alpha-D-glucosamine site.

Belongs to the glycosyltransferase 28 family. MurG subfamily.

The protein localises to the cell inner membrane. It carries out the reaction di-trans,octa-cis-undecaprenyl diphospho-N-acetyl-alpha-D-muramoyl-L-alanyl-D-glutamyl-meso-2,6-diaminopimeloyl-D-alanyl-D-alanine + UDP-N-acetyl-alpha-D-glucosamine = di-trans,octa-cis-undecaprenyl diphospho-[N-acetyl-alpha-D-glucosaminyl-(1-&gt;4)]-N-acetyl-alpha-D-muramoyl-L-alanyl-D-glutamyl-meso-2,6-diaminopimeloyl-D-alanyl-D-alanine + UDP + H(+). Its pathway is cell wall biogenesis; peptidoglycan biosynthesis. Its function is as follows. Cell wall formation. Catalyzes the transfer of a GlcNAc subunit on undecaprenyl-pyrophosphoryl-MurNAc-pentapeptide (lipid intermediate I) to form undecaprenyl-pyrophosphoryl-MurNAc-(pentapeptide)GlcNAc (lipid intermediate II). The sequence is that of UDP-N-acetylglucosamine--N-acetylmuramyl-(pentapeptide) pyrophosphoryl-undecaprenol N-acetylglucosamine transferase from Aeromonas hydrophila subsp. hydrophila (strain ATCC 7966 / DSM 30187 / BCRC 13018 / CCUG 14551 / JCM 1027 / KCTC 2358 / NCIMB 9240 / NCTC 8049).